The following is a 78-amino-acid chain: Small ribosomal subunit protein bS18 (78 aa).

The protein belongs to the bacterial ribosomal protein bS18 family. As to quaternary structure, part of the 30S ribosomal subunit. Forms a tight heterodimer with protein bS6.

Its function is as follows. Binds as a heterodimer with protein bS6 to the central domain of the 16S rRNA, where it helps stabilize the platform of the 30S subunit. The sequence is that of Small ribosomal subunit protein bS18 from Frankia casuarinae (strain DSM 45818 / CECT 9043 / HFP020203 / CcI3).